The following is a 596-amino-acid chain: ATP-dependent lipid A-core flippase (596 aa).

6 helical membrane passes run Val-34–Ile-54, Ala-80–Leu-100, Ala-138–Val-158, Val-164–Ile-184, Gln-263–Val-283, and Val-292–Leu-312. Positions Val-38–Arg-321 constitute an ABC transmembrane type-1 domain. The region spanning Ile-353 to Ile-589 is the ABC transporter domain. Residue Gly-389 to Thr-396 participates in ATP binding.

This sequence belongs to the ABC transporter superfamily. Lipid exporter (TC 3.A.1.106) family. In terms of assembly, homodimer.

The protein resides in the cell inner membrane. It catalyses the reaction ATP + H2O + lipid A-core oligosaccharideSide 1 = ADP + phosphate + lipid A-core oligosaccharideSide 2.. Its function is as follows. Involved in lipopolysaccharide (LPS) biosynthesis. Translocates lipid A-core from the inner to the outer leaflet of the inner membrane. Transmembrane domains (TMD) form a pore in the inner membrane and the ATP-binding domain (NBD) is responsible for energy generation. The chain is ATP-dependent lipid A-core flippase from Burkholderia thailandensis (strain ATCC 700388 / DSM 13276 / CCUG 48851 / CIP 106301 / E264).